The following is a 181-amino-acid chain: Large ribosomal subunit protein uL5 (181 aa).

It belongs to the universal ribosomal protein uL5 family. As to quaternary structure, part of the 50S ribosomal subunit; part of the 5S rRNA/L5/L18/L25 subcomplex. Contacts the 5S rRNA and the P site tRNA. Forms a bridge to the 30S subunit in the 70S ribosome.

Its function is as follows. This is one of the proteins that bind and probably mediate the attachment of the 5S RNA into the large ribosomal subunit, where it forms part of the central protuberance. In the 70S ribosome it contacts protein S13 of the 30S subunit (bridge B1b), connecting the 2 subunits; this bridge is implicated in subunit movement. Contacts the P site tRNA; the 5S rRNA and some of its associated proteins might help stabilize positioning of ribosome-bound tRNAs. The protein is Large ribosomal subunit protein uL5 of Onion yellows phytoplasma (strain OY-M).